The primary structure comprises 119 residues: MALNKRELFQKRRLRVRNKLRKISDGRPRLSVHRSSKNISVQVIDDVKGVTLAAASSLEKDLGVVGKNNVEAAAKIGAAIAERAKKAGVEEVIFDRGGFLFHGKIKALADAAREGGLKF.

This sequence belongs to the universal ribosomal protein uL18 family. As to quaternary structure, part of the 50S ribosomal subunit; part of the 5S rRNA/L5/L18/L25 subcomplex. Contacts the 5S and 23S rRNAs.

This is one of the proteins that bind and probably mediate the attachment of the 5S RNA into the large ribosomal subunit, where it forms part of the central protuberance. This is Large ribosomal subunit protein uL18 from Paracoccus denitrificans (strain Pd 1222).